Here is a 507-residue protein sequence, read N- to C-terminus: Myocyte-specific enhancer factor 2A (507 aa).

The 55-residue stretch at 3–57 folds into the MADS-box domain; the sequence is RKKIQITRIMDERNRQVTFTKRKFGLMKKAYELSVLCDCEIALIIFNSSNKLFQY. Lysine 30 bears the Phosphoserine mark. Positions 58–86 form a DNA-binding region, mef2-type; sequence ASTDMDKVLLKYTEYNEPHESRTNSDIVE. Serine 59 bears the Phosphoserine; by CK2 mark. At serine 98 the chain carries Phosphoserine. Positions 173–183 are enriched in low complexity; sequence TLTDSSMLSPP. A disordered region spans residues 173–229; it reads TLTDSSMLSPPQTTLHRNVSPGAPQRPPSTGNAGGMLSTTDLTVPNGAGSSPVGNGF. A compositionally biased stretch (polar residues) spans 209-229; sequence LSTTDLTVPNGAGSSPVGNGF. Phosphoserine is present on serine 235. The interval 243 to 270 is disordered; that stretch reads GANSLGKVMPTKSPPPPGGGNLGMNSRK. Lysine 249 bears the N6-acetyllysine mark. Serine 255 carries the post-translational modification Phosphoserine; by MAPK14. Positions 266-283 are required for interaction with MAPKs; that stretch reads MNSRKPDLRVVIPPSSKG. The interval 289 to 296 is beta domain; it reads SEEEELEL. Phosphothreonine; by MAPK7 and MAPK14 is present on residues threonine 312 and threonine 319. Threonine 312 carries the phosphothreonine; by NLK modification. At serine 355 the chain carries Phosphoserine; by MAPK7. Residues 397 to 507 are disordered; it reads NQNISIKSEP…KRMRMDAWVT (111 aa). Lysine 403 carries the post-translational modification N6-acetyllysine; alternate. A Glycyl lysine isopeptide (Lys-Gly) (interchain with G-Cter in SUMO); alternate cross-link involves residue lysine 403. Residue serine 408 is modified to Phosphoserine; by CDK5. Threonine 415 carries the phosphothreonine modification. Over residues 420 to 429 the composition is skewed to low complexity; it reads QQQQQQQQQQ. Pro residues predominate over residues 430 to 445; it reads QPPPPPQPQPQPPQPQ. Serine 453 is subject to Phosphoserine; by MAPK. A compositionally biased stretch (low complexity) spans 453-466; that stretch reads SPVDSLSSSSSSYD. Composition is skewed to basic and acidic residues over residues 467 to 477 and 488 to 507; these read GSDREDPRGDF and NTED…AWVT.

This sequence belongs to the MEF2 family. Binds DNA as a homo- or heterodimer. Dimerizes with MEF2D. Interacts with HDAC7. Interacts with PIAS1; the interaction enhances sumoylation. Interacts with HDAC4, HDAC9 and SLC2A4RG. Interacts (via the N-terminal) with MAPK7; the interaction results in the phosphorylation and transcriptional activity of MEF2A. In terms of processing, constitutive phosphorylation on Ser-408 promotes Lys-403 sumoylation thus preventing acetylation at this site. Dephosphorylation on Ser-408 by PPP3CA upon neuron depolarization promotes a switch from sumoylation to acetylation on residue Lys-403 leading to inhibition of dendrite claw differentiation. Phosphorylation on Thr-312 and Thr-319 are the main sites involved in p38 MAPK signaling and activate transcription. Phosphorylated on these sites by MAPK14/p38alpha and MAPK11/p38beta, but not by MAPK13/p38delta nor by MAPK12/p38gamma. Phosphorylation on Ser-408 by CDK5 induced by neurotoxicity inhibits MEF2A transcriptional activation leading to apoptosis of cortical neurons. Phosphorylation on Thr-312, Thr-319 and Ser-355 can be induced by EGF. Post-translationally, sumoylation on Lys-403 is enhanced by PIAS1 and represses transcriptional activity. Phosphorylation on Ser-408 is required for sumoylation. Has no effect on nuclear location nor on DNA binding. Sumoylated with SUMO1 and, to a lesser extent with SUMO2 and SUMO3. PIASx facilitates sumoylation in postsynaptic dendrites in the cerebellar cortex and promotes their morphogenesis. Acetylation on Lys-403 activates transcriptional activity. Acetylated by p300 on several sites in diffentiating myocytes. Acetylation on Lys-4 increases DNA binding and transactivation. Hyperacetylation by p300 leads to enhanced cardiac myocyte growth and heart failure. In terms of processing, proteolytically cleaved in cerebellar granule neurons on several sites by caspase 3 and caspase 7 following neurotoxicity. Preferentially cleaves the CDK5-mediated hyperphosphorylated form which leads to neuron apoptosis and transcriptional inactivation. Isoform MEF2 and isoform MEFA are expressed only in skeletal and cardiac muscle and in the brain. Isoform RSRFC4 and isoform RSRFC9 are expressed in all tissues examined.

The protein localises to the nucleus. Functionally, transcriptional activator which binds specifically to the MEF2 element, 5'-YTA[AT](4)TAR-3', found in numerous muscle-specific genes. Also involved in the activation of numerous growth factor- and stress-induced genes. Mediates cellular functions not only in skeletal and cardiac muscle development, but also in neuronal differentiation and survival. Plays diverse roles in the control of cell growth, survival and apoptosis via p38 MAPK signaling in muscle-specific and/or growth factor-related transcription. In cerebellar granule neurons, phosphorylated and sumoylated MEF2A represses transcription of NUR77 promoting synaptic differentiation. Associates with chromatin to the ZNF16 promoter. This Homo sapiens (Human) protein is Myocyte-specific enhancer factor 2A (MEF2A).